Reading from the N-terminus, the 975-residue chain is Translation initiation factor IF-2 (975 aa).

The segment covering 48-63 (DHLRKSHGATDGDKRK) has biased composition (basic and acidic residues). Disordered regions lie at residues 48 to 84 (DHLRKSHGATDGDKRKITLTRRHTSEIKQADATGKAR) and 96 to 388 (FVKR…QAPT). Residues 104–115 (ETGADQAQAQTD) show a composition bias toward low complexity. Residues 120–177 (AELKRREEEARREAELLEKQAQELRERQERLEREEAERRAREEAAEAERRRAEEEAAA) are compositionally biased toward basic and acidic residues. The span at 178 to 211 (KRAAAAQAEAAQQAAAAREQAQRAQSEPAEQSAQ) shows a compositional bias: low complexity. Positions 212-263 (DEARAAAERAAQREAAKKAEDAAREAADKARAEQEEIRKRREAAEAEARAIR) are enriched in basic and acidic residues. Positions 302–330 (KPAGEAAAARPAAKKPASGAPAPAAAPAG) are enriched in low complexity. Gly residues predominate over residues 359-372 (SSGGVDRGWRGGPK). The 170-residue stretch at 475–644 (PRPPVVTVMG…LLQAEVLELK (170 aa)) folds into the tr-type G domain. The interval 484–491 (GHVDHGKT) is G1. Residue 484 to 491 (GHVDHGKT) participates in GTP binding. A G2 region spans residues 509–513 (GITQH). The segment at 530-533 (DTPG) is G3. GTP-binding positions include 530–534 (DTPGH) and 584–587 (NKID). The tract at residues 584 to 587 (NKID) is G4. Positions 620–622 (SAK) are G5.

Belongs to the TRAFAC class translation factor GTPase superfamily. Classic translation factor GTPase family. IF-2 subfamily.

It is found in the cytoplasm. One of the essential components for the initiation of protein synthesis. Protects formylmethionyl-tRNA from spontaneous hydrolysis and promotes its binding to the 30S ribosomal subunits. Also involved in the hydrolysis of GTP during the formation of the 70S ribosomal complex. The sequence is that of Translation initiation factor IF-2 from Burkholderia pseudomallei (strain 1710b).